A 666-amino-acid polypeptide reads, in one-letter code: ATP-dependent RNA helicase MSS116, mitochondrial (666 aa).

Residues 1-22 (MLRHCSLGLVTTQISAIAPLRL) constitute a mitochondrion transit peptide. Over residues 38 to 60 (RDRRSSRSREDKPYNSRTRRFDD) the composition is skewed to basic and acidic residues. Residues 38-131 (RDRRSSRSRE…KSYSKGGNTS (94 aa)) form a disordered region. Polar residues predominate over residues 120–131 (NTKSYSKGGNTS). Positions 159-187 (SLLEKNVISRDLYDSISRMGFEQLTPVQQ) match the Q motif motif. The Helicase ATP-binding domain occupies 192 to 379 (PIITNSDSDI…NDIMNKEECL (188 aa)). 205–212 (AKTGTGKT) provides a ligand contact to ATP. The short motif at 320–323 (DEAD) is the DEAD box element. Residues 408–560 (NLYAAIEHIR…NIRKFEAQPH (153 aa)) form the Helicase C-terminal domain.

This sequence belongs to the DEAD box helicase family. DDX18/HAS1 subfamily.

Its subcellular location is the mitochondrion matrix. The catalysed reaction is ATP + H2O = ADP + phosphate + H(+). Functionally, ATP-dependent RNA helicase required for mitochondrial splicing of group I and II introns. Also required for efficient mitochondrial translation. This chain is ATP-dependent RNA helicase MSS116, mitochondrial (MSS116), found in Candida glabrata (strain ATCC 2001 / BCRC 20586 / JCM 3761 / NBRC 0622 / NRRL Y-65 / CBS 138) (Yeast).